The following is a 72-amino-acid chain: uncharacterized protein (72 aa).

The tract at residues 51–72 (AKGGRQKGEVVGVDDQCKEHKE) is disordered.

This sequence belongs to the YiiE family.

This is an uncharacterized protein from Escherichia coli O157:H7.